A 337-amino-acid polypeptide reads, in one-letter code: Glutaredoxin-3 (337 aa).

Ala-2 carries the post-translational modification N-acetylalanine. The Thioredoxin domain occupies 2–119 (AAGAAEAGEA…LTKKVQRHVS (118 aa)). At Ser-119 the chain carries Phosphoserine. 2 Glutaredoxin domains span residues 144 to 238 (HAAP…PKLE) and 239 to 337 (ERLK…KGEN). Residues Cys-161 and Cys-263 each coordinate [2Fe-2S] cluster.

Homodimer; the homodimer is independent of 2Fe-2S clusters. Heterotrimer; forms a heterotrimeric complex composed by two BOLA2 molecules and one GLRX3 molecule; linked by [2Fe-2S] clusters. Interacts (via N-terminus) with PRKCQ/PKC-theta. Interacts (via C-terminus) with CSRP3. Interacts with CSRP2.

It is found in the cytoplasm. Its subcellular location is the cytosol. It localises to the cell cortex. The protein localises to the myofibril. The protein resides in the sarcomere. It is found in the z line. Its function is as follows. Together with BOLA2, acts as a cytosolic iron-sulfur (Fe-S) cluster assembly factor that facilitates [2Fe-2S] cluster insertion into a subset of cytosolic proteins. Acts as a critical negative regulator of cardiac hypertrophy and a positive inotropic regulator. Required for hemoglobin maturation. Does not possess any thyoredoxin activity since it lacks the conserved motif that is essential for catalytic activity. The sequence is that of Glutaredoxin-3 (Glrx3) from Mus musculus (Mouse).